Reading from the N-terminus, the 60-residue chain is Large ribosomal subunit protein bL32 (60 aa).

A disordered region spans residues 1 to 22 (MAVPARHTSKAKKNKRRTHYKL). The span at 7-20 (HTSKAKKNKRRTHY) shows a compositional bias: basic residues.

The protein belongs to the bacterial ribosomal protein bL32 family.

This chain is Large ribosomal subunit protein bL32, found in Streptococcus pyogenes serotype M3 (strain ATCC BAA-595 / MGAS315).